We begin with the raw amino-acid sequence, 82 residues long: Envelope small membrane protein (82 aa).

Topologically, residues 1–16 (MVDLFFNDTAWYIGQI) are virion surface. The helical transmembrane segment at 17 to 37 (LVLVLFCLISLIFVVAFLATI) threads the bilayer. Topologically, residues 38-79 (KLCMQLCGFCNFFIISPSAYVYKRGMQLYKSYSEQVIPPTSD) are intravirion.

It belongs to the betacoronaviruses E protein family. In terms of assembly, homopentamer. Interacts with membrane protein M in the budding compartment of the host cell, which is located between endoplasmic reticulum and the Golgi complex. Interacts with Nucleoprotein.

It is found in the host Golgi apparatus membrane. Plays a central role in virus morphogenesis and assembly. Acts as a viroporin and self-assembles in host membranes forming pentameric protein-lipid pores that allow ion transport. Also plays a role in the induction of apoptosis. This chain is Envelope small membrane protein, found in Human coronavirus HKU1 (isolate N1) (HCoV-HKU1).